A 640-amino-acid polypeptide reads, in one-letter code: Acid beta-fructofuranosidase 2, vacuolar (640 aa).

A disordered region spans residues 1 to 22 (MDTNTTSYTPLPGDPFLSGPPE). Over 1 to 29 (MDTNTTSYTPLPGDPFLSGPPETPRRPLK) the chain is Cytoplasmic. Residues 1 to 78 (MDTNTTSYTP…HPQSTTNTML (78 aa)) constitute a propeptide, removed in mature form. Residues 30-49 (GFAVIFASVIFLMSLVALII) traverse the membrane as a helical segment. Residues 50-616 (HQGPQQPPDV…FSPDAASHSS (567 aa)) are Lumenal-facing. Residues 93–96 (WMND), Q112, W120, 155–156 (WT), 219–220 (RD), E274, and D307 each bind substrate. The active site involves D96. C464 and C512 are joined by a disulfide. The helical transmembrane segment at 617–639 (FTPVTVFIKFIVPFGIFLTLYFV) threads the bilayer. A topological domain (cytoplasmic) is located at residue R640.

The protein belongs to the glycosyl hydrolase 32 family. As to expression, expressed in buds, stems, roots and leaves.

The protein resides in the membrane. Its subcellular location is the vacuole membrane. It catalyses the reaction Hydrolysis of terminal non-reducing beta-D-fructofuranoside residues in beta-D-fructofuranosides.. Functionally, vacuolar invertase. The sequence is that of Acid beta-fructofuranosidase 2, vacuolar from Rosa hybrid cultivar.